The following is a 149-amino-acid chain: Deoxyuridine 5'-triphosphate nucleotidohydrolase (149 aa).

Substrate-binding positions include 65–67 (RSG), asparagine 78, 82–84 (TID), and lysine 92.

The protein belongs to the dUTPase family. Mg(2+) serves as cofactor.

It catalyses the reaction dUTP + H2O = dUMP + diphosphate + H(+). The protein operates within pyrimidine metabolism; dUMP biosynthesis; dUMP from dCTP (dUTP route): step 2/2. In terms of biological role, this enzyme is involved in nucleotide metabolism: it produces dUMP, the immediate precursor of thymidine nucleotides and it decreases the intracellular concentration of dUTP so that uracil cannot be incorporated into DNA. The protein is Deoxyuridine 5'-triphosphate nucleotidohydrolase of Chlorobium chlorochromatii (strain CaD3).